The sequence spans 44 residues: Protein PsbN (44 aa).

Residues 6–26 (FFFTIFLWFFLLSITAYSIYV) form a helical membrane-spanning segment.

This sequence belongs to the PsbN family.

It is found in the plastid. It localises to the chloroplast thylakoid membrane. Its function is as follows. May play a role in photosystem I and II biogenesis. This chain is Protein PsbN, found in Stigeoclonium helveticum (Green alga).